Reading from the N-terminus, the 208-residue chain is Putative dioxygenase RT0384 (208 aa).

This sequence belongs to the intradiol ring-cleavage dioxygenase family.

The polypeptide is Putative dioxygenase RT0384 (Rickettsia typhi (strain ATCC VR-144 / Wilmington)).